The sequence spans 359 residues: Phosphoserine aminotransferase (359 aa).

L-glutamate is bound at residue Arg-41. Pyridoxal 5'-phosphate-binding positions include 75 to 76, Trp-99, Thr-147, Asp-166, and Gln-189; that span reads AS. Lys-190 carries the post-translational modification N6-(pyridoxal phosphate)lysine. Position 231-232 (231-232) interacts with pyridoxal 5'-phosphate; the sequence is NT.

It belongs to the class-V pyridoxal-phosphate-dependent aminotransferase family. SerC subfamily. As to quaternary structure, homodimer. It depends on pyridoxal 5'-phosphate as a cofactor.

It is found in the cytoplasm. The catalysed reaction is O-phospho-L-serine + 2-oxoglutarate = 3-phosphooxypyruvate + L-glutamate. It catalyses the reaction 4-(phosphooxy)-L-threonine + 2-oxoglutarate = (R)-3-hydroxy-2-oxo-4-phosphooxybutanoate + L-glutamate. It participates in amino-acid biosynthesis; L-serine biosynthesis; L-serine from 3-phospho-D-glycerate: step 2/3. It functions in the pathway cofactor biosynthesis; pyridoxine 5'-phosphate biosynthesis; pyridoxine 5'-phosphate from D-erythrose 4-phosphate: step 3/5. Functionally, catalyzes the reversible conversion of 3-phosphohydroxypyruvate to phosphoserine and of 3-hydroxy-2-oxo-4-phosphonooxybutanoate to phosphohydroxythreonine. The chain is Phosphoserine aminotransferase from Azobacteroides pseudotrichonymphae genomovar. CFP2.